Here is a 769-residue protein sequence, read N- to C-terminus: Dolichyl-phosphate-mannose--protein mannosyltransferase 2 (769 aa).

The tract at residues 1–44 is disordered; it reads MSTSVEPNETEALLRKQNDLSTTASIEEKYPHQQGEAAEDDDDT. An N-linked (GlcNAc...) asparagine glycan is attached at Asn8. Residues 59–79 traverse the membrane as a helical segment; that stretch reads SLKQVESILAPIVFTALSFFV. An N-linked (GlcNAc...) asparagine glycan is attached at Asn132. The next 3 helical transmembrane spans lie at 152–169, 176–194, and 200–218; these read MRLF…LAYF, FSMF…ESSY, and FILL…VFCF. Asn226 carries an N-linked (GlcNAc...) asparagine glycan. The next 2 membrane-spanning stretches (helical) occupy residues 252 to 272 and 288 to 308; these read VKMV…VDLW and HWFA…MLSF. N-linked (GlcNAc...) asparagine glycosylation is present at Asn324. One can recognise an MIR 1 domain in the interval 342 to 397; it reads PREVSMFHSVITLKNQGLSGGLLHSHVQTFPEGSKQQQVTTYGHKDSNNNWIFQRA. Residues Asn408, Asn453, and Asn462 are each glycosylated (N-linked (GlcNAc...) asparagine). MIR domains lie at 412-468 and 474-534; these read IEYI…VEIM and EDKM…IENN. Helical transmembrane passes span 615 to 635, 655 to 675, 679 to 699, and 718 to 738; these read TTWT…YYLI, FLMG…PFAI, VTYV…FCYE, and LLYL…FWYF.

This sequence belongs to the glycosyltransferase 39 family. As to quaternary structure, PMT1 and PMT2 form a functional heterodimer.

It localises to the endoplasmic reticulum membrane. It carries out the reaction a di-trans,poly-cis-dolichyl beta-D-mannosyl phosphate + L-seryl-[protein] = 3-O-(alpha-D-mannosyl)-L-seryl-[protein] + a di-trans,poly-cis-dolichyl phosphate + H(+). It catalyses the reaction a di-trans,poly-cis-dolichyl beta-D-mannosyl phosphate + L-threonyl-[protein] = 3-O-(alpha-D-mannosyl)-L-threonyl-[protein] + a di-trans,poly-cis-dolichyl phosphate + H(+). Its pathway is protein modification; protein glycosylation. Functionally, protein mannosyltransferase (PMT) involved in hyphal growth and drug sensitivity. Transfers mannose from Dol-P-mannose to Ser or Thr residues on proteins. PMT1, PMT2 and PMT4 account for most of the protein-O-glycosylation activity, while PMT5 and PMT6 may specifically modulate a much narrower spectrum of target proteins. Essential protein that plays an important role in virulence. This Candida albicans (strain SC5314 / ATCC MYA-2876) (Yeast) protein is Dolichyl-phosphate-mannose--protein mannosyltransferase 2.